A 37-amino-acid chain; its full sequence is Large ribosomal subunit protein bL36 (37 aa).

It belongs to the bacterial ribosomal protein bL36 family.

In Clostridium kluyveri (strain NBRC 12016), this protein is Large ribosomal subunit protein bL36.